Here is a 444-residue protein sequence, read N- to C-terminus: MSLMVVSMACVGLFLVQRAGPHMGGQDKPFLSAWPSAVVPRGGHVTLRCHYRHRFNNFMLYKEDRIHIPIFHGRIFQESFNMSPVTTAHAGNYTCRGSHPHSPTGWSAPSNPVVIMVTGNHRKPSLLAHPGPLVKSGERVILQCWSDIMFEHFFLHKEGISKDPSRLVGQIHDGVSKANFSIGPMMLALAGTYRCYGSVTHTPYQLSAPSDPLDIVVTGPYEKPSLSAQPGPKVQAGESVTLSCSSRSSYDMYHLSREGGAHERRLPAVRKVNRTFQADFPLGPATHGGTYRCFGSFRHSPYEWSDPSDPLLVSVTGNPSSSWPSPTEPSSKSGNPRHLHILIGTSVVIILFILLLFFLLHLWCSNKKNAAVMDQEPAGNRTANSEDSDEQDPEEVTYAQLDHCVFTQRKITRPSQRPKTPPTDTILYTELPNAKPRSKVVSCP.

An N-terminal signal peptide occupies residues Met1–Pro21. Over His22–His340 the chain is Extracellular. 3 consecutive Ig-like C2-type domains span residues Gly42–Ser102, Gly137–Thr202, and Gly237–Ser300. 3 disulfide bridges follow: Cys49/Cys95, Cys144/Cys195, and Cys244/Cys293. N-linked (GlcNAc...) asparagine glycans are attached at residues Asn92, Asn179, and Asn273. The interval Val315–Gly334 is disordered. Residues Pro319–Ser333 show a composition bias toward low complexity. A helical membrane pass occupies residues Ile341–Leu360. At His361–Pro444 the chain is on the cytoplasmic side. Disordered stretches follow at residues Gln375–Glu394 and Arg409–Pro444.

Belongs to the immunoglobulin superfamily.

Its subcellular location is the cell membrane. In terms of biological role, receptor on natural killer (NK) cells for HLA Bw4 allele. Inhibits the activity of NK cells thus preventing cell lysis. In Homo sapiens (Human), this protein is Killer cell immunoglobulin-like receptor 3DL1.